A 202-amino-acid polypeptide reads, in one-letter code: Na(+)-translocating NADH-quinone reductase subunit E (202 aa).

The next 6 membrane-spanning stretches (helical) occupy residues 11 to 31, 35 to 55, 79 to 99, 114 to 134, 144 to 164, and 180 to 200; these read AVFVENMALAFFLGMCTFIAI, VETAIGLGVAVIVVLGITMPV, LSFLGLLTFIGVIAALVQILE, GVFLPLITVNCAIMGGSLFMV, TVYGIGAGVSWALAIAALAGI, and LGITFITIGLMSLGFMSFSGV.

It belongs to the NqrDE/RnfAE family. As to quaternary structure, composed of six subunits; NqrA, NqrB, NqrC, NqrD, NqrE and NqrF.

The protein resides in the cell inner membrane. The enzyme catalyses a ubiquinone + n Na(+)(in) + NADH + H(+) = a ubiquinol + n Na(+)(out) + NAD(+). In terms of biological role, NQR complex catalyzes the reduction of ubiquinone-1 to ubiquinol by two successive reactions, coupled with the transport of Na(+) ions from the cytoplasm to the periplasm. NqrA to NqrE are probably involved in the second step, the conversion of ubisemiquinone to ubiquinol. The polypeptide is Na(+)-translocating NADH-quinone reductase subunit E (Ectopseudomonas mendocina (strain ymp) (Pseudomonas mendocina)).